Here is a 297-residue protein sequence, read N- to C-terminus: N-acetylmuramic acid 6-phosphate etherase (297 aa).

Residues 55 to 218 form the SIS domain; that stretch reads AAAALKAGGR…STGAMVKLGK (164 aa). Glutamate 83 (proton donor) is an active-site residue. Residue glutamate 114 is part of the active site.

This sequence belongs to the GCKR-like family. MurNAc-6-P etherase subfamily. As to quaternary structure, homodimer.

The enzyme catalyses N-acetyl-D-muramate 6-phosphate + H2O = N-acetyl-D-glucosamine 6-phosphate + (R)-lactate. It functions in the pathway amino-sugar metabolism; 1,6-anhydro-N-acetylmuramate degradation. It participates in amino-sugar metabolism; N-acetylmuramate degradation. Its pathway is cell wall biogenesis; peptidoglycan recycling. Specifically catalyzes the cleavage of the D-lactyl ether substituent of MurNAc 6-phosphate, producing GlcNAc 6-phosphate and D-lactate. Together with AnmK, is also required for the utilization of anhydro-N-acetylmuramic acid (anhMurNAc) either imported from the medium or derived from its own cell wall murein, and thus plays a role in cell wall recycling. The polypeptide is N-acetylmuramic acid 6-phosphate etherase (Serratia proteamaculans (strain 568)).